The chain runs to 452 residues: Trigger factor (452 aa).

Positions 162 to 247 (GDTVTIDYKG…IHEVKSKQLP (86 aa)) constitute a PPIase FKBP-type domain. Residues 427 to 452 (AKAKLEAKEAEEAEDKEEAEDKKENK) form a disordered region.

This sequence belongs to the FKBP-type PPIase family. Tig subfamily.

The protein localises to the cytoplasm. The enzyme catalyses [protein]-peptidylproline (omega=180) = [protein]-peptidylproline (omega=0). In terms of biological role, involved in protein export. Acts as a chaperone by maintaining the newly synthesized protein in an open conformation. Functions as a peptidyl-prolyl cis-trans isomerase. The sequence is that of Trigger factor from Lactobacillus helveticus (strain DPC 4571).